Reading from the N-terminus, the 348-residue chain is NADH-cytochrome b5 reductase 2 (348 aa).

Residues 41-61 (TLLYGAAAAAVAGAGYYFLGG) traverse the membrane as a helical segment. The FAD-binding FR-type domain maps to 97 to 202 (QGWVSLKLEE…KGPLPKYPWT (106 aa)). 205–240 (KHGHIALVAGGTGITPMFQLCRAIFNNPDDQTKVTL) contacts FAD.

This sequence belongs to the flavoprotein pyridine nucleotide cytochrome reductase family. It depends on FAD as a cofactor.

It is found in the mitochondrion outer membrane. The catalysed reaction is 2 Fe(III)-[cytochrome b5] + NADH = 2 Fe(II)-[cytochrome b5] + NAD(+) + H(+). In terms of biological role, may mediate the reduction of outer membrane cytochrome b5. The sequence is that of NADH-cytochrome b5 reductase 2 (MCR1) from Chaetomium globosum (strain ATCC 6205 / CBS 148.51 / DSM 1962 / NBRC 6347 / NRRL 1970) (Soil fungus).